An 83-amino-acid polypeptide reads, in one-letter code: Defensin-1 (83 aa).

Positions 1-33 (MAGKGVGSRLSTLFLLVLLVITIGMMQVQVAEG) are cleaved as a signal peptide. 4 disulfide bridges follow: Cys-36–Cys-82, Cys-47–Cys-67, Cys-53–Cys-76, and Cys-57–Cys-78.

Belongs to the DEFL family.

Its subcellular location is the secreted. In terms of biological role, plant defense peptide. Has antifungal activity against B.cinera, F.oxysporum, F.solani and H.annosum with IC(50) values of 0.4 ug/ml, 2.9 ug/ml, 0.9 ug/ml and 1.4 ug/ml, respectively. Has modest antifungal activity against C.albicans and T.reesei. Causes thickening of F.oxysporum hyphae and an increase in their branching. Lacks antibacterial activity against the Gram-negative bacteria E.coli and E.carotovora. The sequence is that of Defensin-1 from Pinus sylvestris (Scotch pine).